The primary structure comprises 288 residues: ATP synthase gamma chain 1 (288 aa).

Belongs to the ATPase gamma chain family. In terms of assembly, F-type ATPases have 2 components, CF(1) - the catalytic core - and CF(0) - the membrane proton channel. CF(1) has five subunits: alpha(3), beta(3), gamma(1), delta(1), epsilon(1). CF(0) has three main subunits: a, b and c.

It is found in the cell inner membrane. Functionally, produces ATP from ADP in the presence of a proton gradient across the membrane. The gamma chain is believed to be important in regulating ATPase activity and the flow of protons through the CF(0) complex. This is ATP synthase gamma chain 1 from Photobacterium profundum (strain SS9).